The sequence spans 364 residues: Aminomethyltransferase (364 aa).

Belongs to the GcvT family. As to quaternary structure, the glycine cleavage system is composed of four proteins: P, T, L and H.

The enzyme catalyses N(6)-[(R)-S(8)-aminomethyldihydrolipoyl]-L-lysyl-[protein] + (6S)-5,6,7,8-tetrahydrofolate = N(6)-[(R)-dihydrolipoyl]-L-lysyl-[protein] + (6R)-5,10-methylene-5,6,7,8-tetrahydrofolate + NH4(+). The glycine cleavage system catalyzes the degradation of glycine. In Escherichia coli O127:H6 (strain E2348/69 / EPEC), this protein is Aminomethyltransferase.